A 186-amino-acid chain; its full sequence is Adenylate kinase (186 aa).

12-17 (GAGKGT) serves as a coordination point for ATP. The interval 32 to 61 (STGDLLRAEVNAQSPLGKEAALIMNKGELV) is NMP. Residues T33, R38, 59 to 61 (ELV), 86 to 89 (GFPR), and Q93 each bind AMP. Residues 127–133 (SRGRSDD) are LID. R128 provides a ligand contact to ATP. The AMP site is built by R130 and R141. G169 is an ATP binding site.

It belongs to the adenylate kinase family. As to quaternary structure, monomer.

It localises to the cytoplasm. The enzyme catalyses AMP + ATP = 2 ADP. Its pathway is purine metabolism; AMP biosynthesis via salvage pathway; AMP from ADP: step 1/1. Catalyzes the reversible transfer of the terminal phosphate group between ATP and AMP. Plays an important role in cellular energy homeostasis and in adenine nucleotide metabolism. The sequence is that of Adenylate kinase from Prochlorococcus marinus (strain MIT 9211).